We begin with the raw amino-acid sequence, 434 residues long: Nicotinate phosphoribosyltransferase (434 aa).

At His-242 the chain carries Phosphohistidine; by autocatalysis.

The protein belongs to the NAPRTase family. Post-translationally, transiently phosphorylated on a His residue during the reaction cycle. Phosphorylation strongly increases the affinity for substrates and increases the rate of nicotinate D-ribonucleotide production. Dephosphorylation regenerates the low-affinity form of the enzyme, leading to product release.

The catalysed reaction is nicotinate + 5-phospho-alpha-D-ribose 1-diphosphate + ATP + H2O = nicotinate beta-D-ribonucleotide + ADP + phosphate + diphosphate. It functions in the pathway cofactor biosynthesis; NAD(+) biosynthesis; nicotinate D-ribonucleotide from nicotinate: step 1/1. Its function is as follows. Catalyzes the synthesis of beta-nicotinate D-ribonucleotide from nicotinate and 5-phospho-D-ribose 1-phosphate at the expense of ATP. The protein is Nicotinate phosphoribosyltransferase of Bradyrhizobium diazoefficiens (strain JCM 10833 / BCRC 13528 / IAM 13628 / NBRC 14792 / USDA 110).